A 335-amino-acid chain; its full sequence is Homeobox protein DBX1 (335 aa).

2 disordered regions span residues Ile-58–Ala-102 and Lys-240–Ser-335. Residues Gly-83–Pro-95 show a composition bias toward low complexity. The homeobox DNA-binding region spans Gly-181–Lys-240. Over residues Gly-299–Phe-317 the composition is skewed to low complexity. Positions Ser-318–Ser-335 are enriched in acidic residues.

This sequence belongs to the H2.0 homeobox family.

The protein resides in the nucleus. Could have a role in patterning the central nervous system during embryogenesis. Has a key role in regulating the distinct phenotypic features that distinguish two major classes of ventral interneurons, V0 and V1 neurons. Regulates the transcription factor profile, neurotransmitter phenotype, intraspinal migratory path and axonal trajectory of V0 neurons, features that differentiate them from an adjacent set of V1 neurons. The chain is Homeobox protein DBX1 (Dbx1) from Mus musculus (Mouse).